A 194-amino-acid chain; its full sequence is GTP cyclohydrolase-2 (194 aa).

Residue 50–54 (RIHSE) coordinates GTP. Zn(2+) is bound by residues Cys55, Cys66, and Cys68. Residues 94-96 (EGR) and Thr116 contribute to the GTP site. Catalysis depends on Asp128, which acts as the Proton acceptor. Arg130 serves as the catalytic Nucleophile. GTP contacts are provided by Thr151 and Lys156.

It belongs to the GTP cyclohydrolase II family. Requires Zn(2+) as cofactor.

It catalyses the reaction GTP + 4 H2O = 2,5-diamino-6-hydroxy-4-(5-phosphoribosylamino)-pyrimidine + formate + 2 phosphate + 3 H(+). It participates in cofactor biosynthesis; riboflavin biosynthesis; 5-amino-6-(D-ribitylamino)uracil from GTP: step 1/4. In terms of biological role, catalyzes the conversion of GTP to 2,5-diamino-6-ribosylamino-4(3H)-pyrimidinone 5'-phosphate (DARP), formate and pyrophosphate. This is GTP cyclohydrolase-2 from Helicobacter hepaticus (strain ATCC 51449 / 3B1).